A 1257-amino-acid chain; its full sequence is Liprin-alpha-2 (1257 aa).

Positions 1 to 29 are disordered; it reads MMCEVMPTINEDTPMSQRGSQSSGSDSDS. Over residues 16-26 the composition is skewed to low complexity; that stretch reads SQRGSQSSGSD. 2 coiled-coil regions span residues 29 to 154 and 185 to 235; these read SHFE…SLRM and KALD…SSEG. A Phosphoserine modification is found at serine 236. Position 237 is a phosphothreonine (threonine 237). Serine 239 is modified (phosphoserine). Coiled coils occupy residues 264–541 and 643–695; these read TDDT…SLIE and HSDA…GLNL. Residues 439–463 form a disordered region; it reads GQLEEKNQELQRARQREKMNEEHNK. Phosphoserine occurs at positions 687 and 689. Residues 709-725 show a composition bias toward low complexity; that stretch reads TASSLASSSPPSGHSTP. Disordered regions lie at residues 709 to 738 and 759 to 834; these read TASS…EMDR and EEDG…KSSI. The segment covering 787 to 802 has biased composition (polar residues); that stretch reads TLPSSYHNDARSSLSA. 2 positions are modified to phosphoserine: serine 817 and serine 820. SAM domains are found at residues 898-964, 1020-1084, and 1108-1177; these read WDGP…MVSL, NHEW…LKRL, and WSND…LLAL. Residues 1081–1107 are a coiled coil; that stretch reads LKRLNYDRKELERRREASQHEIKDVLV.

It belongs to the liprin family. Liprin-alpha subfamily. As to quaternary structure, forms homodimers and heterodimers with liprins-alpha and liprins-beta. Interacts with the second PTPase domain of PTPRD, PTPRF and PTPRS. Interacts with KIF1A; the interaction decreases in presence of calcium.

It localises to the cytoplasm. The protein localises to the cell surface. Its subcellular location is the cell projection. The protein resides in the dendritic spine. Alters PTPRF cellular localization and induces PTPRF clustering. May regulate the disassembly of focal adhesions. May localize receptor-like tyrosine phosphatases type 2A at specific sites on the plasma membrane, possibly regulating their interaction with the extracellular environment and their association with substrates. In neuronal cells, is a scaffolding protein in the dendritic spines which acts as immobile postsynaptic post able to recruit KIF1A-driven dense core vesicles to dendritic spines. The polypeptide is Liprin-alpha-2 (Ppfia2) (Mus musculus (Mouse)).